The following is a 629-amino-acid chain: DNA-directed RNA polymerase subunit beta' (629 aa).

4 residues coordinate Zn(2+): Cys-70, Cys-72, Cys-85, and Cys-88. Positions 472, 474, and 476 each coordinate Mg(2+).

It belongs to the RNA polymerase beta' chain family. RpoC1 subfamily. As to quaternary structure, in plastids the minimal PEP RNA polymerase catalytic core is composed of four subunits: alpha, beta, beta', and beta''. When a (nuclear-encoded) sigma factor is associated with the core the holoenzyme is formed, which can initiate transcription. The cofactor is Mg(2+). Zn(2+) is required as a cofactor.

The protein resides in the plastid. It localises to the chloroplast. The enzyme catalyses RNA(n) + a ribonucleoside 5'-triphosphate = RNA(n+1) + diphosphate. Functionally, DNA-dependent RNA polymerase catalyzes the transcription of DNA into RNA using the four ribonucleoside triphosphates as substrates. This Pyropia yezoensis (Susabi-nori) protein is DNA-directed RNA polymerase subunit beta'.